The sequence spans 84 residues: Small ribosomal subunit protein uS17 (84 aa).

The protein belongs to the universal ribosomal protein uS17 family. As to quaternary structure, part of the 30S ribosomal subunit.

Its function is as follows. One of the primary rRNA binding proteins, it binds specifically to the 5'-end of 16S ribosomal RNA. In Clostridium botulinum (strain Eklund 17B / Type B), this protein is Small ribosomal subunit protein uS17.